A 206-amino-acid polypeptide reads, in one-letter code: Probable glutathione S-transferase 6 (206 aa).

The 78-residue stretch at 2 to 79 folds into the GST N-terminal domain; the sequence is VHYKLVYFPL…YLAREFGIAG (78 aa). Glutathione-binding positions include tyrosine 8, tryptophan 39, lysine 43, 49–51, and 63–64; these read GQL and QS. The region spanning 81-206 is the GST C-terminal domain; that stretch reads NDTEAAEVDA…YIANRPDYPF (126 aa).

Belongs to the GST superfamily. Sigma family.

The catalysed reaction is RX + glutathione = an S-substituted glutathione + a halide anion + H(+). Conjugation of reduced glutathione to a wide number of exogenous and endogenous hydrophobic electrophiles. This chain is Probable glutathione S-transferase 6 (gst-6), found in Caenorhabditis elegans.